We begin with the raw amino-acid sequence, 470 residues long: Cysteine--tRNA ligase (470 aa).

C31 is a Zn(2+) binding site. A 'HIGH' region motif is present at residues 33–43 (PTVYDYVHIGH). 3 residues coordinate Zn(2+): C209, H234, and E238. The 'KMSKS' region signature appears at 266 to 270 (KMSKS). K269 contributes to the ATP binding site.

This sequence belongs to the class-I aminoacyl-tRNA synthetase family. Requires Zn(2+) as cofactor.

It localises to the cytoplasm. It catalyses the reaction tRNA(Cys) + L-cysteine + ATP = L-cysteinyl-tRNA(Cys) + AMP + diphosphate. This is Cysteine--tRNA ligase from Saccharolobus solfataricus (strain ATCC 35092 / DSM 1617 / JCM 11322 / P2) (Sulfolobus solfataricus).